The primary structure comprises 138 residues: Large ribosomal subunit protein uL16 (138 aa).

A compositionally biased stretch (basic residues) spans Met-1–Arg-17. Positions Met-1–Gly-24 are disordered.

Belongs to the universal ribosomal protein uL16 family. In terms of assembly, part of the 50S ribosomal subunit.

Functionally, binds 23S rRNA and is also seen to make contacts with the A and possibly P site tRNAs. The sequence is that of Large ribosomal subunit protein uL16 from Kineococcus radiotolerans (strain ATCC BAA-149 / DSM 14245 / SRS30216).